Reading from the N-terminus, the 66-residue chain is UPF0337 protein BA_0987/GBAA_0987/BAS0923 (66 aa).

Residues 1-22 (MSESGLKEQITGKVEKTKGQVK) are disordered. Residues 13 to 22 (KVEKTKGQVK) are compositionally biased toward basic and acidic residues.

It belongs to the UPF0337 (CsbD) family.

The polypeptide is UPF0337 protein BA_0987/GBAA_0987/BAS0923 (Bacillus anthracis).